Consider the following 56-residue polypeptide: MSGSGAMLLGLLILVAMATSLDTREICWNHSECDDPSEWCCRMGSGHGSCLPVCRP.

The N-terminal stretch at 1–23 (MSGSGAMLLGLLILVAMATSLDT) is a signal peptide. 3 cysteine pairs are disulfide-bonded: Cys27–Cys41, Cys33–Cys50, and Cys40–Cys54.

Expressed by the venom duct.

It is found in the secreted. In terms of biological role, probable neurotoxin. The sequence is that of Conotoxin Cal6.41a from Californiconus californicus (California cone).